The following is a 181-amino-acid chain: Adenylyl-sulfate kinase (181 aa).

20–27 (GLSGAGKS) contacts ATP. The active-site Phosphoserine intermediate is the Ser-94.

The protein belongs to the APS kinase family.

It carries out the reaction adenosine 5'-phosphosulfate + ATP = 3'-phosphoadenylyl sulfate + ADP + H(+). The protein operates within sulfur metabolism; hydrogen sulfide biosynthesis; sulfite from sulfate: step 2/3. Catalyzes the synthesis of activated sulfate. The polypeptide is Adenylyl-sulfate kinase (Deinococcus geothermalis (strain DSM 11300 / CIP 105573 / AG-3a)).